The chain runs to 129 residues: Trefoil factor 2 (129 aa).

An N-terminal signal peptide occupies residues 1 to 23 (MGPRGLQLLAVLLALGLCAPAGA). A Pyrrolidone carboxylic acid modification is found at glutamine 24. P-type domains lie at 29–73 (CQCS…FHPL) and 79–122 (EQCV…FFPI). 7 cysteine pairs are disulfide-bonded: cysteine 29-cysteine 127, cysteine 31-cysteine 58, cysteine 42-cysteine 57, cysteine 52-cysteine 69, cysteine 81-cysteine 107, cysteine 91-cysteine 106, and cysteine 101-cysteine 118.

The protein localises to the secreted. In terms of biological role, inhibits gastrointestinal motility and gastric acid secretion. Could function as a structural component of gastric mucus, possibly by stabilizing glycoproteins in the mucus gel through interactions with carbohydrate side chains. The polypeptide is Trefoil factor 2 (TFF2) (Canis lupus familiaris (Dog)).